The chain runs to 132 residues: MVMTDPIADFLTRIRNANQAKHEVLEVPASNIKKGIADILKREGFVKNVEVIEDDKQGIIRVFLKYGQNGERVITNLKRISKPGLRVYTKHEDMPKVLNGLGIAIVSTSEGLLTDKEARQKNIGGEVLAYIW.

Belongs to the universal ribosomal protein uS8 family. In terms of assembly, part of the 30S ribosomal subunit. Contacts proteins S5 and S12.

In terms of biological role, one of the primary rRNA binding proteins, it binds directly to 16S rRNA central domain where it helps coordinate assembly of the platform of the 30S subunit. The chain is Small ribosomal subunit protein uS8 from Streptococcus agalactiae serotype V (strain ATCC BAA-611 / 2603 V/R).